A 236-amino-acid chain; its full sequence is Ribose-5-phosphate isomerase A 2 (236 aa).

Residues 31–34 (SGTT), 86–89 (DGPD), and 99–102 (KGGG) contribute to the substrate site. The active-site Proton acceptor is the E108. Position 126 (K126) interacts with substrate.

The protein belongs to the ribose 5-phosphate isomerase family. In terms of assembly, homodimer.

It catalyses the reaction aldehydo-D-ribose 5-phosphate = D-ribulose 5-phosphate. The protein operates within carbohydrate degradation; pentose phosphate pathway; D-ribose 5-phosphate from D-ribulose 5-phosphate (non-oxidative stage): step 1/1. Functionally, catalyzes the reversible conversion of ribose-5-phosphate to ribulose 5-phosphate. The sequence is that of Ribose-5-phosphate isomerase A 2 from Yersinia pestis.